Here is a 295-residue protein sequence, read N- to C-terminus: Phosphoribosylaminoimidazole-succinocarboxamide synthase (295 aa).

It belongs to the SAICAR synthetase family.

It carries out the reaction 5-amino-1-(5-phospho-D-ribosyl)imidazole-4-carboxylate + L-aspartate + ATP = (2S)-2-[5-amino-1-(5-phospho-beta-D-ribosyl)imidazole-4-carboxamido]succinate + ADP + phosphate + 2 H(+). It functions in the pathway purine metabolism; IMP biosynthesis via de novo pathway; 5-amino-1-(5-phospho-D-ribosyl)imidazole-4-carboxamide from 5-amino-1-(5-phospho-D-ribosyl)imidazole-4-carboxylate: step 1/2. The chain is Phosphoribosylaminoimidazole-succinocarboxamide synthase from Nitrosomonas europaea (strain ATCC 19718 / CIP 103999 / KCTC 2705 / NBRC 14298).